A 714-amino-acid chain; its full sequence is Elongation factor G-like protein (714 aa).

The region spanning 21–289 is the tr-type G domain; it reads GGVRNVVLVG…VATRGFPSPM (269 aa). A G1 region spans residues 30 to 37; sequence GPSGGGKT. 30 to 37 is a GTP binding site; sequence GPSGGGKT. The tract at residues 73-77 is G2; the sequence is QRSVG. The segment at 94 to 97 is G3; the sequence is DTPG. GTP-binding positions include 94–98 and 148–151; these read DTPGY and TKLD. The interval 148–151 is G4; that stretch reads TKLD. Residues 267-269 are G5; that stretch reads CSS.

This sequence belongs to the TRAFAC class translation factor GTPase superfamily. Classic translation factor GTPase family. EF-G/EF-2 subfamily.

The sequence is that of Elongation factor G-like protein from Mycobacterium tuberculosis (strain ATCC 25618 / H37Rv).